The following is a 172-amino-acid chain: uncharacterized protein (172 aa).

Disordered stretches follow at residues Met1–Asn39 and Asp90–Asn112. The span at Asn98–Ser110 shows a compositional bias: low complexity.

This is an uncharacterized protein from Dictyostelium discoideum (Social amoeba).